The sequence spans 272 residues: MSTQSKGRKITTSVIRGMKKKGEKITMLTAYDYAMASLLDEVGVEMLLVGDSLGMVVLGYESTLPVTMNDMLHHTRAVSRGANNAMVVADLPFMSYQCSVEEAVRNAGRFLQEAGAHAVKLEGGREIAESVKRMTVSGIPVVGHLGLTPQSVQQFGGFKVQGKGDAAAQRIMEDAKIIEEAGAFSVVLECVPAPLAQRITDDLAIPTIGIGAGAGCDGQVLVVNDMLGIYERFTPKFVKKYANLSDNIRGAVKQYIEEVKNGTFPDQDHSFL.

Positions 51 and 90 each coordinate Mg(2+). Residues 51 to 52 (DS), D90, and K120 contribute to the 3-methyl-2-oxobutanoate site. A Mg(2+)-binding site is contributed by E122. E189 serves as the catalytic Proton acceptor.

This sequence belongs to the PanB family. In terms of assembly, homodecamer; pentamer of dimers. It depends on Mg(2+) as a cofactor.

The protein resides in the cytoplasm. The enzyme catalyses 3-methyl-2-oxobutanoate + (6R)-5,10-methylene-5,6,7,8-tetrahydrofolate + H2O = 2-dehydropantoate + (6S)-5,6,7,8-tetrahydrofolate. The protein operates within cofactor biosynthesis; (R)-pantothenate biosynthesis; (R)-pantoate from 3-methyl-2-oxobutanoate: step 1/2. Its function is as follows. Catalyzes the reversible reaction in which hydroxymethyl group from 5,10-methylenetetrahydrofolate is transferred onto alpha-ketoisovalerate to form ketopantoate. The sequence is that of 3-methyl-2-oxobutanoate hydroxymethyltransferase from Syntrophus aciditrophicus (strain SB).